Reading from the N-terminus, the 486-residue chain is CDT1-like protein b (486 aa).

Disordered stretches follow at residues 273 to 294 (PEGGDDNSLRSTNSLARGPSRS) and 348 to 371 (VKDDISNESGDEKSNYEGDNASDD). Over residues 281–294 (LRSTNSLARGPSRS) the composition is skewed to polar residues. Positions 348–363 (VKDDISNESGDEKSNY) are enriched in basic and acidic residues.

The protein belongs to the Cdt1 family. As to expression, expressed in proliferating (e.g. shoot and root apical meristems, organ primordia, guard cells and stomatal lineage) and endoreplicating cells (e.g. developing trichomes).

Its subcellular location is the nucleus. Its function is as follows. Member of the pre-replication complex. Regulates endoreduplication. Involved in the coordination of cell and plastid division. The chain is CDT1-like protein b (CDT1B) from Arabidopsis thaliana (Mouse-ear cress).